Reading from the N-terminus, the 463-residue chain is MYGNYSHFMKFPAGYGGSPGHTGSTSMSPSAALSTGKPMDSHPSYTDTPVSAPRTLSAVGTPLNALGSPYRVITSAMGPPSGALAAPPGINLVAPPSSQLNVVNSVSSSEDIKPLPGLPGIGNMNYPSTSPGSLVKHICAICGDRSSGKHYGVYSCEGCKGFFKRTIRKDLIYTCRDNKDCLIDKRQRNRCQYCRYQKCLVMGMKREAVQEERQRSRERAESEAECATSGHEDMPVERILEAELAVEPKTESYGDMNMENSTNDPVTNICHAADKQLFTLVEWAKRIPHFSDLTLEDQVILLRAGWNELLIASFSHRSVSVQDGILLATGLHVHRSSAHSAGVGSIFDRVLTELVSKMKDMQMDKSELGCLRAIVLFNPDAKGLSNPSEVETLREKVYATLEAYTKQKYPEQPGRFAKLLLRLPALRSIGLKCLEHLFFFKLIGDTPIDTFLMEMLETPLQIT.

The modulating stretch occupies residues 1 to 138; the sequence is MYGNYSHFMK…TSPGSLVKHI (138 aa). Residues 18–53 form a disordered region; it reads SPGHTGSTSMSPSAALSTGKPMDSHPSYTDTPVSAP. Positions 21–33 are enriched in polar residues; sequence HTGSTSMSPSAAL. A DNA-binding region (nuclear receptor) is located at residues 136–211; sequence KHICAICGDR…MGMKREAVQE (76 aa). 2 NR C4-type zinc fingers span residues 139 to 159 and 175 to 199; these read CAIC…CEGC and CRDN…YQKC. The tract at residues 205–230 is hinge; sequence KREAVQEERQRSRERAESEAECATSG. The NR LBD domain maps to 231–459; the sequence is HEDMPVERIL…TFLMEMLETP (229 aa).

This sequence belongs to the nuclear hormone receptor family. NR2 subfamily. In terms of assembly, homodimer. Heterodimer with a RAR molecule. Binds DNA preferentially as a RAR/RXR heterodimer. Interacts with RARA. In terms of processing, acetylated by EP300. Expressed in aortic endothelial cells (at protein level).

The protein localises to the nucleus. The protein resides in the cytoplasm. Its function is as follows. Receptor for retinoic acid. Retinoic acid receptors bind as heterodimers to their target response elements in response to their ligands, all-trans or 9-cis retinoic acid, and regulate gene expression in various biological processes. The RAR/RXR heterodimers bind to the retinoic acid response elements (RARE) composed of tandem 5'-AGGTCA-3' sites known as DR1-DR5. The high affinity ligand for RXRs is 9-cis retinoic acid. This is Retinoic acid receptor RXR-gamma (RXRG) from Homo sapiens (Human).